The chain runs to 338 residues: D-erythrose-4-phosphate dehydrogenase (338 aa).

11 to 12 (RI) is a binding site for NAD(+). Substrate contacts are provided by residues 153–155 (SCT), Arg199, 212–213 (TK), and Arg235. Cys154 functions as the Nucleophile in the catalytic mechanism. NAD(+) is bound at residue Asn317.

It belongs to the glyceraldehyde-3-phosphate dehydrogenase family. Epd subfamily. In terms of assembly, homotetramer.

The protein resides in the cytoplasm. The enzyme catalyses D-erythrose 4-phosphate + NAD(+) + H2O = 4-phospho-D-erythronate + NADH + 2 H(+). The protein operates within cofactor biosynthesis; pyridoxine 5'-phosphate biosynthesis; pyridoxine 5'-phosphate from D-erythrose 4-phosphate: step 1/5. Catalyzes the NAD-dependent conversion of D-erythrose 4-phosphate to 4-phosphoerythronate. The sequence is that of D-erythrose-4-phosphate dehydrogenase from Shewanella amazonensis (strain ATCC BAA-1098 / SB2B).